The primary structure comprises 396 residues: Probable mannan endo-1,4-beta-mannosidase A-2 (396 aa).

The first 21 residues, M1–A21, serve as a signal peptide directing secretion. W99 lines the substrate pocket. N120 is a glycosylation site (N-linked (GlcNAc...) asparagine). N212 provides a ligand contact to substrate. E213 functions as the Proton donor in the catalytic mechanism. An N-linked (GlcNAc...) asparagine glycan is attached at N270. Residue Y288 coordinates substrate. E321 (nucleophile) is an active-site residue. W351 contributes to the substrate binding site.

It belongs to the glycosyl hydrolase 5 (cellulase A) family.

It localises to the secreted. The enzyme catalyses Random hydrolysis of (1-&gt;4)-beta-D-mannosidic linkages in mannans, galactomannans and glucomannans.. Its function is as follows. Endo-1,4-mannanase, a crucial enzyme for depolymerization of seed galactomannans and wood galactoglucomannans. This chain is Probable mannan endo-1,4-beta-mannosidase A-2 (manA-2), found in Aspergillus terreus (strain NIH 2624 / FGSC A1156).